The primary structure comprises 206 residues: Cytochrome c biogenesis ATP-binding export protein CcmA (206 aa).

An ABC transporter domain is found at 3–206 (VSVDDLCVTR…LAGASDEAFL (204 aa)). 35-42 (GPNGSGKT) lines the ATP pocket.

This sequence belongs to the ABC transporter superfamily. CcmA exporter (TC 3.A.1.107) family. The complex is composed of two ATP-binding proteins (CcmA) and two transmembrane proteins (CcmB).

It localises to the cell inner membrane. The enzyme catalyses heme b(in) + ATP + H2O = heme b(out) + ADP + phosphate + H(+). In terms of biological role, part of the ABC transporter complex CcmAB involved in the biogenesis of c-type cytochromes; once thought to export heme, this seems not to be the case, but its exact role is uncertain. Responsible for energy coupling to the transport system. The sequence is that of Cytochrome c biogenesis ATP-binding export protein CcmA from Roseobacter denitrificans (strain ATCC 33942 / OCh 114) (Erythrobacter sp. (strain OCh 114)).